A 41-amino-acid chain; its full sequence is Histone H2B.3, sperm (41 aa).

The segment at 1 to 41 (MPRSPSKSSPKKGSPRKASPKRGGKGAKRAGKGGRRRTVVK) is disordered. 4 short sequence motifs (SPKK motif) span residues 4–7 (SPSK), 9–12 (SPKK), 14–17 (SPRK), and 19–22 (SPKR). Basic residues predominate over residues 9–41 (SPKKGSPRKASPKRGGKGAKRAGKGGRRRTVVK). Phosphoserine is present on residues serine 14 and serine 19.

The protein belongs to the histone H2B family. The nucleosome is a histone octamer containing two molecules each of H2A, H2B, H3 and H4 assembled in one H3-H4 heterotetramer and two H2A-H2B heterodimers. The octamer wraps approximately 147 bp of DNA. Monoubiquitination gives a specific tag for epigenetic transcriptional activation and is also prerequisite for histone H3 'Lys-4' and 'Lys-79' methylation. In terms of processing, phosphorylated on SPKK motifs 3 and 4; which may regulate DNA binding. Dephosphorylated during maturation of spermatids to mature sperm and rephosphorylated at fertilization.

The protein resides in the nucleus. It is found in the chromosome. In terms of biological role, core component of nucleosome. Nucleosomes wrap and compact DNA into chromatin, limiting DNA accessibility to the cellular machineries which require DNA as a template. Histones thereby play a central role in transcription regulation, DNA repair, DNA replication and chromosomal stability. DNA accessibility is regulated via a complex set of post-translational modifications of histones, also called histone code, and nucleosome remodeling. The polypeptide is Histone H2B.3, sperm (Echinus esculentus (Sea urchin)).